The following is a 218-amino-acid chain: YlmG homolog protein 1-2, chloroplastic (218 aa).

The N-terminal 83 residues, methionine 1 to leucine 83, are a transit peptide targeting the chloroplast. 2 helical membrane passes run leucine 133–valine 153 and isoleucine 187–glycine 207.

This sequence belongs to the YggT family.

It is found in the plastid. The protein resides in the chloroplast thylakoid membrane. Its function is as follows. Not required for the biogenesis and accumulation of native cytochrome b6 in the thylakoid membrane. Not functionally involved in the pathway for covalent binding of the c-type heme to cytochrome b6. The protein is YlmG homolog protein 1-2, chloroplastic of Arabidopsis thaliana (Mouse-ear cress).